We begin with the raw amino-acid sequence, 301 residues long: uncharacterized protein (301 aa).

An N-terminal signal peptide occupies residues 1-25; the sequence is MKFKNTLSIFKILIILFSFYNVAFS. The Extracellular segment spans residues 26–279; the sequence is DDTEKYTFKG…STTGSKDSST (254 aa). The disordered stretch occupies residues 174 to 281; the sequence is LYTGSSNTPN…TGSKDSSTGN (108 aa). Asn-191, Asn-212, Asn-234, and Asn-241 each carry an N-linked (GlcNAc...) asparagine glycan. Positions 204 to 234 are enriched in low complexity; it reads SSSDSTNSNSSSTDTASSSPSSSPSSSPSPN. Low complexity predominate over residues 254–281; sequence GGVETSTAGSSTGTTSSTTGSKDSSTGN. A helical membrane pass occupies residues 280–300; it reads GNSILPTLIIVTFFVLTLVIM. Position 301 (Ser-301) is a topological domain, cytoplasmic.

Its subcellular location is the membrane. This is an uncharacterized protein from Dictyostelium discoideum (Social amoeba).